The sequence spans 519 residues: Ribonuclease Y (519 aa).

Residues 3–23 (LIEIVLLLVGMAVGAATGFIL) form a helical membrane-spanning segment. Residues 209–272 (TVTAVSLPSE…QIAKMALERL (64 aa)) enclose the KH domain. The HD domain occupies 335–428 (VLQHSMEVAS…VQAADSLSGA (94 aa)).

It belongs to the RNase Y family.

The protein localises to the cell membrane. Endoribonuclease that initiates mRNA decay. The polypeptide is Ribonuclease Y (Oleidesulfovibrio alaskensis (strain ATCC BAA-1058 / DSM 17464 / G20) (Desulfovibrio alaskensis)).